A 95-amino-acid chain; its full sequence is Nickel and cobalt resistance protein CnrY (95 aa).

Residues 1–45 (MADVEEWLTHARKVTQEASIGVDVTSIQECISAEPAQRVLVARRD) are Cytoplasmic-facing. Residues 46–68 (AWRAICCAAFAALVAFAAINRVA) form a helical membrane-spanning segment. The Periplasmic portion of the chain corresponds to 69–95 (TIMLEKPAPTWVATPSAASPFGLLIGK).

This sequence to A.xylosoxydans NccY.

The protein resides in the cell inner membrane. Nickel and cobalt resistance proteins CnrA, CnrB, CnrC CnrH and CnrR may be involved in the regulation of CNR. Functionally, cnrH alone is able to activate cnr expression, and both CnrY and CrnX are needed for nickel induction of CnrH. In the absence of wild-type CnrY (due either to a frameshift, PubMed:10671463 or absence of the transcript, PubMed:10671464), nickel and cobalt resistance is constitutive, indicating that CrnY may act as a repressor or an anti-sigma factor. This is Nickel and cobalt resistance protein CnrY (cnrY) from Cupriavidus metallidurans (strain ATCC 43123 / DSM 2839 / NBRC 102507 / CH34) (Ralstonia metallidurans).